The sequence spans 395 residues: Homoserine O-acetyltransferase (395 aa).

The AB hydrolase-1 domain maps to 65–363 (PIVLIEHALT…SPTGHDGFLI (299 aa)). The active-site Nucleophile is Ser160. Residue Arg230 participates in substrate binding. Active-site residues include Asp328 and His358. Asp359 contributes to the substrate binding site.

This sequence belongs to the AB hydrolase superfamily. MetX family. Homodimer.

It is found in the cytoplasm. It carries out the reaction L-homoserine + acetyl-CoA = O-acetyl-L-homoserine + CoA. It functions in the pathway amino-acid biosynthesis; L-methionine biosynthesis via de novo pathway; O-acetyl-L-homoserine from L-homoserine: step 1/1. Transfers an acetyl group from acetyl-CoA to L-homoserine, forming acetyl-L-homoserine. The polypeptide is Homoserine O-acetyltransferase (Corynebacterium jeikeium (strain K411)).